The following is a 434-amino-acid chain: F-box/LRR-repeat protein 21 (434 aa).

Positions 39 to 85 (RLDWGSLPHRVVLCVFQYLPLIDRARASSVCRRWNEVFHIPDLWRKF) constitute an F-box domain. LRR repeat units lie at residues 140-165 (LVNC…SKSH), 187-213 (DTPV…KMSS), 214-239 (CPHV…ALNY), 242-265 (LSDE…RIDV), 322-347 (GRSV…VVCA), 349-374 (GIQV…GLSE), and 375-400 (CEVS…SIME).

In terms of assembly, part of the SCF (SKP1-CUL1-F-box) E3 ubiquitin-protein ligase complex SCF(FBXL21) composed of CUL1, SKP1, RBX1 and FBXL21. Interacts with CRY2. Interacts with CRY1. Expressed in the adenohypophysis, hypothalamus (especially in the suprachiasmatic nucleus or nuclei, SCN) and pineal, all neuroendocrine structures associated with timing and homeostasis.

The protein localises to the cytoplasm. The protein resides in the cytosol. Its subcellular location is the nucleus. Its pathway is protein modification; protein ubiquitination. Functionally, substrate-recognition component of the SCF(FBXL21) E3 ubiquitin ligase complex involved in circadian rhythm function. Plays a key role in the maintenance of both the speed and the robustness of the circadian clock oscillation. The SCF(FBXL21) complex mainly acts in the cytosol and mediates ubiquitination of CRY proteins (CRY1 and CRY2), leading to CRY proteins stabilization. The SCF(FBXL21) complex counteracts the activity of the SCF(FBXL3) complex and protects CRY proteins from degradation. Involved in the hypothalamic suprachiasmatic nucleus (SCN) clock regulating temporal organization of the daily activities. The sequence is that of F-box/LRR-repeat protein 21 (Fbxl21) from Ovis aries (Sheep).